The primary structure comprises 181 residues: HGPRTase-like protein 2 (181 aa).

It belongs to the purine/pyrimidine phosphoribosyltransferase family. Archaeal HPRT subfamily.

May catalyze a purine salvage reaction, the substrate is unknown. This chain is HGPRTase-like protein 2, found in Haloferax volcanii (strain ATCC 29605 / DSM 3757 / JCM 8879 / NBRC 14742 / NCIMB 2012 / VKM B-1768 / DS2) (Halobacterium volcanii).